The chain runs to 435 residues: Putative GMP synthase [glutamine-hydrolyzing] 2 (435 aa).

The region spanning 1–120 is the Glutamine amidotransferase type-1; truncated domain; it reads MKQDMIVILD…VFDTCQAEAN (120 aa). The 190-residue stretch at 121-310 folds into the GMPS ATP-PPase domain; the sequence is WNMANFVNDQ…LGLPYEMVYR (190 aa). Residue 148–154 participates in ATP binding; it reads SGGVDSS.

As to quaternary structure, homodimer.

The enzyme catalyses XMP + L-glutamine + ATP + H2O = GMP + L-glutamate + AMP + diphosphate + 2 H(+). It participates in purine metabolism; GMP biosynthesis; GMP from XMP (L-Gln route): step 1/1. Functionally, catalyzes the synthesis of GMP from XMP. The sequence is that of Putative GMP synthase [glutamine-hydrolyzing] 2 (guaA2) from Bacteroides thetaiotaomicron (strain ATCC 29148 / DSM 2079 / JCM 5827 / CCUG 10774 / NCTC 10582 / VPI-5482 / E50).